We begin with the raw amino-acid sequence, 66 residues long: Large ribosomal subunit protein uL29 (66 aa).

This sequence belongs to the universal ribosomal protein uL29 family.

This chain is Large ribosomal subunit protein uL29, found in Geobacillus thermodenitrificans (strain NG80-2).